The sequence spans 491 residues: Aspartyl/glutamyl-tRNA(Asn/Gln) amidotransferase subunit B (491 aa).

Belongs to the GatB/GatE family. GatB subfamily. As to quaternary structure, heterotrimer of A, B and C subunits.

It catalyses the reaction L-glutamyl-tRNA(Gln) + L-glutamine + ATP + H2O = L-glutaminyl-tRNA(Gln) + L-glutamate + ADP + phosphate + H(+). It carries out the reaction L-aspartyl-tRNA(Asn) + L-glutamine + ATP + H2O = L-asparaginyl-tRNA(Asn) + L-glutamate + ADP + phosphate + 2 H(+). Allows the formation of correctly charged Asn-tRNA(Asn) or Gln-tRNA(Gln) through the transamidation of misacylated Asp-tRNA(Asn) or Glu-tRNA(Gln) in organisms which lack either or both of asparaginyl-tRNA or glutaminyl-tRNA synthetases. The reaction takes place in the presence of glutamine and ATP through an activated phospho-Asp-tRNA(Asn) or phospho-Glu-tRNA(Gln). The polypeptide is Aspartyl/glutamyl-tRNA(Asn/Gln) amidotransferase subunit B (Trichormus variabilis (strain ATCC 29413 / PCC 7937) (Anabaena variabilis)).